The chain runs to 312 residues: Malate dehydrogenase (312 aa).

Residues 7 to 13 (GAAGGIG) and Asp-34 contribute to the NAD(+) site. Substrate is bound by residues Arg-81 and Arg-87. NAD(+)-binding positions include Asn-94 and 117–119 (ITN). Residues Asn-119 and Arg-153 each contribute to the substrate site. Residue His-177 is the Proton acceptor of the active site. Position 227 (Met-227) interacts with NAD(+).

It belongs to the LDH/MDH superfamily. MDH type 1 family. In terms of assembly, homodimer.

It carries out the reaction (S)-malate + NAD(+) = oxaloacetate + NADH + H(+). Its function is as follows. Catalyzes the reversible oxidation of malate to oxaloacetate. The sequence is that of Malate dehydrogenase from Pectobacterium carotovorum subsp. carotovorum (strain PC1).